The chain runs to 291 residues: Homoserine kinase (291 aa).

80–90 provides a ligand contact to ATP; that stretch reads PLARGLGSSST.

Belongs to the GHMP kinase family. Homoserine kinase subfamily.

The protein localises to the cytoplasm. The catalysed reaction is L-homoserine + ATP = O-phospho-L-homoserine + ADP + H(+). Its pathway is amino-acid biosynthesis; L-threonine biosynthesis; L-threonine from L-aspartate: step 4/5. Its function is as follows. Catalyzes the ATP-dependent phosphorylation of L-homoserine to L-homoserine phosphate. This chain is Homoserine kinase, found in Lactiplantibacillus plantarum (strain ATCC BAA-793 / NCIMB 8826 / WCFS1) (Lactobacillus plantarum).